We begin with the raw amino-acid sequence, 223 residues long: Imidazoleglycerol-phosphate dehydratase (223 aa).

This sequence belongs to the imidazoleglycerol-phosphate dehydratase family.

It catalyses the reaction D-erythro-1-(imidazol-4-yl)glycerol 3-phosphate = 3-(imidazol-4-yl)-2-oxopropyl phosphate + H2O. The protein operates within amino-acid biosynthesis; L-histidine biosynthesis; L-histidine from 5-phospho-alpha-D-ribose 1-diphosphate: step 6/9. In Torulaspora delbrueckii (Yeast), this protein is Imidazoleglycerol-phosphate dehydratase (HIS3).